We begin with the raw amino-acid sequence, 240 residues long: Bactofilin BacP (240 aa).

Residues 116–240 (DVEPGRLPAE…KKVVVKKKTR (125 aa)) are interacts with PadC. The segment at 117–240 (VEPGRLPAER…KKVVVKKKTR (124 aa)) is disordered. The span at 126 to 150 (RPAVVRPTAVTRPTATPARPTIPAA) shows a compositional bias: low complexity. The segment covering 151–173 (RPMPPPPPSRPTPPPPPARPSAP) has biased composition (pro residues). The segment covering 229–240 (AKKKVVVKKKTR) has biased composition (basic residues).

It belongs to the bactofilin family. As to quaternary structure, interacts with BacN and probably also BacO, the 3 proteins colocalize as an extended structure. Interacts with PadC.

Its subcellular location is the cytoplasm. The protein localises to the cytoskeleton. Its function is as follows. A non-essential component of the chromosome segregation machinery. Positions the ParA-ParB-parS chromosome segregation machinery within the cell; BacP seems to be the most important bactofilin in this process. Forms a heteropolymeric, subpolar scaffold in the cell; BacP probably forms the core, BacO contributes to position and integrity while BacN does not seem to contribute to assembly. The sequence is that of Bactofilin BacP from Myxococcus xanthus (strain DK1622).